We begin with the raw amino-acid sequence, 493 residues long: Glutamate--tRNA ligase (493 aa).

Positions 10–20 (PSPTGDPHVGT) match the 'HIGH' region motif. A 'KMSKS' region motif is present at residues 251–255 (KLSKR). ATP is bound at residue Lys254.

Belongs to the class-I aminoacyl-tRNA synthetase family. Glutamate--tRNA ligase type 1 subfamily. As to quaternary structure, monomer.

It is found in the cytoplasm. The enzyme catalyses tRNA(Glu) + L-glutamate + ATP = L-glutamyl-tRNA(Glu) + AMP + diphosphate. Its function is as follows. Catalyzes the attachment of glutamate to tRNA(Glu) in a two-step reaction: glutamate is first activated by ATP to form Glu-AMP and then transferred to the acceptor end of tRNA(Glu). The protein is Glutamate--tRNA ligase of Pseudomonas putida (strain ATCC 700007 / DSM 6899 / JCM 31910 / BCRC 17059 / LMG 24140 / F1).